Here is a 265-residue protein sequence, read N- to C-terminus: Tryptophan 2,3-dioxygenase (265 aa).

Substrate contacts are provided by residues 38 to 42 (FIVVH) and arginine 104. Histidine 223 provides a ligand contact to heme. Threonine 237 serves as a coordination point for substrate.

It belongs to the tryptophan 2,3-dioxygenase family. As to quaternary structure, homotetramer. Requires heme as cofactor.

The catalysed reaction is L-tryptophan + O2 = N-formyl-L-kynurenine. Its pathway is amino-acid degradation; L-tryptophan degradation via kynurenine pathway; L-kynurenine from L-tryptophan: step 1/2. Heme-dependent dioxygenase that catalyzes the oxidative cleavage of the L-tryptophan (L-Trp) pyrrole ring and converts L-tryptophan to N-formyl-L-kynurenine. Catalyzes the oxidative cleavage of the indole moiety. The polypeptide is Tryptophan 2,3-dioxygenase (Anaeromyxobacter dehalogenans (strain 2CP-C)).